A 1727-amino-acid chain; its full sequence is DNA-directed RNA polymerase II subunit rpb1 (1727 aa).

The Zn(2+) site is built by Cys66, Cys69, Cys76, His79, Cys106, Cys109, Cys147, and Cys175. Asp486, Asp488, and Asp490 together coordinate Mg(2+). The interval 819–831 (PQEFFFHAMGGRE) is bridging helix. Lys1266 is covalently cross-linked (Glycyl lysine isopeptide (Lys-Gly) (interchain with G-Cter in ubiquitin)). 2 disordered regions span residues 1478-1512 (EPSN…YDAP) and 1551-1727 (PTYS…NKKK). The segment covering 1480-1505 (SNVSYPDTPGSQTPSYSYGDGSTTPF) has biased composition (polar residues). A run of 23 repeats spans residues 1553 to 1559 (YSPTSPS), 1560 to 1566 (YSPTSPS), 1567 to 1573 (YSPTSPS), 1574 to 1580 (YSPTSPS), 1581 to 1587 (YSPTSPS), 1588 to 1594 (YSPTSPS), 1595 to 1601 (YSPTSPF), 1602 to 1608 (YSPTSPS), 1609 to 1615 (YSPTSPS), 1616 to 1622 (YSPTSPS), 1623 to 1629 (YSPTSPS), 1630 to 1636 (YSPTSPS), 1637 to 1643 (YSPTSPS), 1644 to 1650 (YSPTSPS), 1651 to 1657 (YSPTSPS), 1658 to 1664 (YSPTSPS), 1665 to 1671 (YSPTSPS), 1672 to 1678 (YSPTSPS), 1679 to 1685 (YSPTSPS), 1686 to 1692 (YSPSSPS), 1693 to 1699 (YSPSSPS), 1700 to 1706 (YSPSSPS), and 1707 to 1713 (YSPSSPT). The segment at 1553 to 1713 (YSPTSPSYSP…SPSYSPSSPT (161 aa)) is C-terminal domain (CTD); 23 X 7 AA tandem repeats of Y-S-P-[ST]-S-P-[FST].

This sequence belongs to the RNA polymerase beta' chain family. Component of the RNA polymerase II (Pol II) complex consisting of 12 subunits. The tandem heptapeptide repeats in the C-terminal domain (CTD) can be highly phosphorylated. The phosphorylation activates Pol II. Phosphorylation occurs mainly at residues 'Ser-2' and 'Ser-5' of the heptapeptide repeat. The phosphorylation state is believed to result from the balanced action of site-specific CTD kinases and phosphatase, and a 'CTD code' that specifies the position of Pol II within the transcription cycle has been proposed. Post-translationally, following transcription stress, the elongating form of RNA polymerase II (RNA pol IIo) is polyubiquitinated via 'Lys-63'-linkages on Lys-1266 at DNA damage sites without leading to degradation: ubiquitination promotes RNA pol IIo backtracking to allow access by the transcription-coupled nucleotide excision repair (TC-NER) machinery. Subsequent DEF1-dependent polyubiquitination by the elongin complex via 'Lys-48'-linkages may lead to proteasome-mediated degradation; presumably at stalled RNA pol II where TC-NER has failed, to halt global transcription and enable 'last resort' DNA repair pathways.

It localises to the nucleus. It carries out the reaction RNA(n) + a ribonucleoside 5'-triphosphate = RNA(n+1) + diphosphate. Its function is as follows. DNA-dependent RNA polymerase catalyzes the transcription of DNA into RNA using the four ribonucleoside triphosphates as substrates. Largest and catalytic component of RNA polymerase II which synthesizes mRNA precursors and many functional non-coding RNAs. Forms the polymerase active center together with the second largest subunit. Pol II is the central component of the basal RNA polymerase II transcription machinery. It is composed of mobile elements that move relative to each other. RPB1 is part of the core element with the central large cleft, the clamp element that moves to open and close the cleft and the jaws that are thought to grab the incoming DNA template. At the start of transcription, a single-stranded DNA template strand of the promoter is positioned within the central active site cleft of Pol II. A bridging helix emanates from RPB1 and crosses the cleft near the catalytic site and is thought to promote translocation of Pol II by acting as a ratchet that moves the RNA-DNA hybrid through the active site by switching from straight to bent conformations at each step of nucleotide addition. During transcription elongation, Pol II moves on the template as the transcript elongates. Elongation is influenced by the phosphorylation status of the C-terminal domain (CTD) of Pol II largest subunit (RPB1), which serves as a platform for assembly of factors that regulate transcription initiation, elongation, termination and mRNA processing. The protein is DNA-directed RNA polymerase II subunit rpb1 (polr2a) of Dictyostelium discoideum (Social amoeba).